The sequence spans 519 residues: 2-isopropylmalate synthase (519 aa).

In terms of domain architecture, Pyruvate carboxyltransferase spans 5-267 (VIIFDTTLRD…TTNVNPMEIS (263 aa)). 4 residues coordinate Mn(2+): Asp-14, His-202, His-204, and Asn-238. The segment at 392-519 (RLESINVQSG…KEQLIHIDQV (128 aa)) is regulatory domain.

It belongs to the alpha-IPM synthase/homocitrate synthase family. LeuA type 1 subfamily. Homodimer. It depends on Mn(2+) as a cofactor.

The protein localises to the cytoplasm. The catalysed reaction is 3-methyl-2-oxobutanoate + acetyl-CoA + H2O = (2S)-2-isopropylmalate + CoA + H(+). Its pathway is amino-acid biosynthesis; L-leucine biosynthesis; L-leucine from 3-methyl-2-oxobutanoate: step 1/4. In terms of biological role, catalyzes the condensation of the acetyl group of acetyl-CoA with 3-methyl-2-oxobutanoate (2-ketoisovalerate) to form 3-carboxy-3-hydroxy-4-methylpentanoate (2-isopropylmalate). The chain is 2-isopropylmalate synthase from Psychromonas ingrahamii (strain DSM 17664 / CCUG 51855 / 37).